The chain runs to 421 residues: Trimethyllysine dioxygenase, mitochondrial (421 aa).

Residues 1–15 constitute a mitochondrion transit peptide; it reads MWYHKLLHQQSRLRN. Residues K179 and K236 each carry the N6-acetyllysine modification. Fe cation is bound by residues H242, D244, and H389.

The protein belongs to the gamma-BBH/TMLD family. Homodimer. Fe(2+) is required as a cofactor. The cofactor is L-ascorbate.

The protein resides in the mitochondrion matrix. The enzyme catalyses N(6),N(6),N(6)-trimethyl-L-lysine + 2-oxoglutarate + O2 = (3S)-3-hydroxy-N(6),N(6),N(6)-trimethyl-L-lysine + succinate + CO2. Its pathway is amine and polyamine biosynthesis; carnitine biosynthesis. In terms of biological role, converts trimethyllysine (TML) into hydroxytrimethyllysine (HTML). The protein is Trimethyllysine dioxygenase, mitochondrial (Tmlhe) of Mus musculus (Mouse).